We begin with the raw amino-acid sequence, 226 residues long: Orotate phosphoribosyltransferase (226 aa).

Residues Arg-107, Lys-108, Lys-111, and 133–141 (EDLTTDGGS) contribute to the 5-phospho-alpha-D-ribose 1-diphosphate site. Thr-137 serves as a coordination point for orotate.

The protein belongs to the purine/pyrimidine phosphoribosyltransferase family. PyrE subfamily. Homodimer. Requires Mg(2+) as cofactor.

It carries out the reaction orotidine 5'-phosphate + diphosphate = orotate + 5-phospho-alpha-D-ribose 1-diphosphate. It functions in the pathway pyrimidine metabolism; UMP biosynthesis via de novo pathway; UMP from orotate: step 1/2. In terms of biological role, catalyzes the transfer of a ribosyl phosphate group from 5-phosphoribose 1-diphosphate to orotate, leading to the formation of orotidine monophosphate (OMP). This chain is Orotate phosphoribosyltransferase, found in Dinoroseobacter shibae (strain DSM 16493 / NCIMB 14021 / DFL 12).